The primary structure comprises 173 residues: Lithostathine-2 (173 aa).

A signal peptide spans 1–22; that stretch reads MAQNNVYLILFLCLMFLSYSQG. Residues 41-171 enclose the C-type lectin domain; sequence INCPEGANAY…EAQYSFVCKF (131 aa). 3 disulfides stabilise this stretch: Cys-43–Cys-54, Cys-71–Cys-169, and Cys-144–Cys-161.

Expressed only in regenerating islets and normal exocrine pancreas, but not in normal pancreatic islets. Expressed strongly in pancreas, weakly in liver, but not at all in gall bladder.

Its subcellular location is the secreted. Its function is as follows. Might act as an inhibitor of spontaneous calcium carbonate precipitation. This Mus musculus (Mouse) protein is Lithostathine-2 (Reg2).